Here is a 561-residue protein sequence, read N- to C-terminus: Asparagine synthetase [glutamine-hydrolyzing] (561 aa).

Cysteine 2 functions as the For GATase activity in the catalytic mechanism. Residues 2–191 (CGIWALFGSD…PGHYEVLDLK (190 aa)) enclose the Glutamine amidotransferase type-2 domain. L-glutamine-binding positions include 49–53 (RLAVV), 75–77 (NGE), and aspartate 97. One can recognise an Asparagine synthetase domain in the interval 213 to 536 (HAIYDSVEKL…PGRADWLTHY (324 aa)). ATP is bound by residues leucine 256, isoleucine 288, and 363–364 (SG). Lysine 385 carries the post-translational modification N6-acetyllysine. Threonine 545 carries the post-translational modification Phosphothreonine. The residue at position 557 (serine 557) is a Phosphoserine.

The enzyme catalyses L-aspartate + L-glutamine + ATP + H2O = L-asparagine + L-glutamate + AMP + diphosphate + H(+). It participates in amino-acid biosynthesis; L-asparagine biosynthesis; L-asparagine from L-aspartate (L-Gln route): step 1/1. The sequence is that of Asparagine synthetase [glutamine-hydrolyzing] (Asns) from Rattus norvegicus (Rat).